Reading from the N-terminus, the 116-residue chain is Large ribosomal subunit protein bL19 (116 aa).

This sequence belongs to the bacterial ribosomal protein bL19 family.

Its function is as follows. This protein is located at the 30S-50S ribosomal subunit interface and may play a role in the structure and function of the aminoacyl-tRNA binding site. The sequence is that of Large ribosomal subunit protein bL19 from Staphylococcus carnosus (strain TM300).